Reading from the N-terminus, the 435-residue chain is MFEYQQPDPRGHFGIYGGSFVSETLTHAINELKAAYAKYQFDPAFVAEFNYELAHFVGRPSPVYHADRMSREQGGAQIFLKREDLNHTGAHKINNTIGQAMLARRMGKPRVIAETGAGQHGVATATICARYGLECVVYMGSEDVKRQSPNVYRMNLLGATVVPVESGSRTLKDALNEAMRDWVANVDNTFYIIGTVAGPHPYPMMVRDFQSVIGKECLVQMPEMLQAAGCHTTQPDAVVACVGGGSNAMGIFHPYIAHEATRLIGVEAAGLGMDSGKHSASLQRGSPGVLHGNRTYVLQDDNGQVTETHSISAGLDYPGVGPEHAFLKDIGRAEYVGITDQEALAAFHYLCRTEGIIPALESSHAVAYAMKLAKTMRPDQSILVNLSGRGDKDIGTVADLSHADFYCRPSCKGQSVKGADNAQPSANQQVVKVAQ.

At lysine 92 the chain carries N6-(pyridoxal phosphate)lysine.

This sequence belongs to the TrpB family. Tetramer of two alpha and two beta chains. Requires pyridoxal 5'-phosphate as cofactor.

The catalysed reaction is (1S,2R)-1-C-(indol-3-yl)glycerol 3-phosphate + L-serine = D-glyceraldehyde 3-phosphate + L-tryptophan + H2O. The protein operates within amino-acid biosynthesis; L-tryptophan biosynthesis; L-tryptophan from chorismate: step 5/5. In terms of biological role, the beta subunit is responsible for the synthesis of L-tryptophan from indole and L-serine. The polypeptide is Tryptophan synthase beta chain (Albidiferax ferrireducens (strain ATCC BAA-621 / DSM 15236 / T118) (Rhodoferax ferrireducens)).